A 177-amino-acid polypeptide reads, in one-letter code: GTP-dependent dephospho-CoA kinase (177 aa).

The GTP site is built by Gly-25, Tyr-31, Asp-48, Val-49, Val-50, Asp-67, Lys-69, Glu-124, and Asp-147.

This sequence belongs to the GTP-dependent DPCK family. Monomer in solution.

The enzyme catalyses 3'-dephospho-CoA + GTP = GDP + CoA + H(+). The protein operates within cofactor biosynthesis; coenzyme A biosynthesis. Functionally, catalyzes the GTP-dependent phosphorylation of the 3'-hydroxyl group of dephosphocoenzyme A to form coenzyme A (CoA). Can also use UTP, with lower efficiency and has weak activity with ATP, but shows a strong preference for GTP as the phosphate donor. This chain is GTP-dependent dephospho-CoA kinase, found in Thermococcus kodakarensis (strain ATCC BAA-918 / JCM 12380 / KOD1) (Pyrococcus kodakaraensis (strain KOD1)).